Consider the following 412-residue polypeptide: Putative gustatory receptor 58c (412 aa).

Transmembrane regions (helical) follow at residues 39–59 (VVYC…ALFV) and 72–92 (MFGV…LFLM). Residue Asn158 is glycosylated (N-linked (GlcNAc...) asparagine). A helical transmembrane segment spans residues 173-193 (IVYALIMILLMSYVDMTVYMV). A glycan (N-linked (GlcNAc...) asparagine) is linked at Asn203. The next 3 helical transmembrane spans lie at 224–241 (IPRE…RKLW), 262–282 (VLFN…RLWI), and 296–316 (ILYA…FSIF). N-linked (GlcNAc...) asparagine glycosylation is found at Asn337, Asn386, and Asn391.

The protein belongs to the insect chemoreceptor superfamily. Gustatory receptor (GR) family. Gr10a subfamily.

The protein resides in the cell membrane. In terms of biological role, probable gustatory receptor which mediates acceptance or avoidance behavior, depending on its substrates. In Drosophila melanogaster (Fruit fly), this protein is Putative gustatory receptor 58c (Gr58c).